Here is a 423-residue protein sequence, read N- to C-terminus: AP-1 complex subunit mu-2 (423 aa).

The 254-residue stretch at 168–421 (KNEVFIDVIE…ITQSGDYQLR (254 aa)) folds into the MHD domain.

This sequence belongs to the adaptor complexes medium subunit family. Adaptor protein complex 1 (AP-1) is a heterotetramer composed of two large adaptins (gamma-type subunit AP1G1 and beta-type subunit AP1B1), a medium adaptin (mu-type subunit AP1M1 or AP1M2) and a small adaptin (sigma-type subunit AP1S1 or AP1S2 or AP1S3). Interacts with P2X4. In terms of processing, phosphorylation of membrane-bound AP1M1/AP1M2 increases its affinity for sorting signals.

It localises to the cytoplasmic vesicle. Its subcellular location is the clathrin-coated vesicle membrane. The protein localises to the golgi apparatus. Functionally, subunit of clathrin-associated adaptor protein complex 1 that plays a role in protein sorting in the trans-Golgi network (TGN) and endosomes. The AP complexes mediate the recruitment of clathrin to membranes and the recognition of sorting signals within the cytosolic tails of transmembrane cargo molecules. This is AP-1 complex subunit mu-2 from Bos taurus (Bovine).